We begin with the raw amino-acid sequence, 291 residues long: Phosphate import ATP-binding protein PstB (291 aa).

The span at 1-17 (MANTNVKEKELAKHTDQ) shows a compositional bias: basic and acidic residues. The disordered stretch occupies residues 1–40 (MANTNVKEKELAKHTDQSQESISTVVSSNEVKHNKESDSN). Residues 18-29 (SQESISTVVSSN) show a composition bias toward polar residues. Basic and acidic residues predominate over residues 30 to 40 (EVKHNKESDSN). The ABC transporter domain occupies 45 to 286 (YSTQNLDLWY…PSDKQTEDYI (242 aa)). 77 to 84 (GPSGCGKS) is a binding site for ATP.

The protein belongs to the ABC transporter superfamily. Phosphate importer (TC 3.A.1.7) family. In terms of assembly, the complex is composed of two ATP-binding proteins (PstB), two transmembrane proteins (PstC and PstA) and a solute-binding protein (PstS).

Its subcellular location is the cell membrane. The catalysed reaction is phosphate(out) + ATP + H2O = ADP + 2 phosphate(in) + H(+). In terms of biological role, part of the ABC transporter complex PstSACB involved in phosphate import. Responsible for energy coupling to the transport system. This chain is Phosphate import ATP-binding protein PstB, found in Staphylococcus haemolyticus (strain JCSC1435).